We begin with the raw amino-acid sequence, 473 residues long: GTPase Der (473 aa).

2 consecutive EngA-type G domains span residues Pro5 to Val170 and Leu178 to Met351. GTP is bound by residues Gly11–Ser18, Asp58–Ile62, Asn123–Asp126, Gly184–Ser191, Asp231–Val235, and Asn296–Asp299. Residues Phe352–Thr436 form the KH-like domain. Residues Pro438–Lys473 are disordered. Residues Gln459–Lys473 are compositionally biased toward basic residues.

Belongs to the TRAFAC class TrmE-Era-EngA-EngB-Septin-like GTPase superfamily. EngA (Der) GTPase family. As to quaternary structure, associates with the 50S ribosomal subunit.

In terms of biological role, GTPase that plays an essential role in the late steps of ribosome biogenesis. This chain is GTPase Der, found in Psychrobacter sp. (strain PRwf-1).